The chain runs to 415 residues: Gamma-glutamyl phosphate reductase (415 aa).

It belongs to the gamma-glutamyl phosphate reductase family.

The protein resides in the cytoplasm. The enzyme catalyses L-glutamate 5-semialdehyde + phosphate + NADP(+) = L-glutamyl 5-phosphate + NADPH + H(+). The protein operates within amino-acid biosynthesis; L-proline biosynthesis; L-glutamate 5-semialdehyde from L-glutamate: step 2/2. Its function is as follows. Catalyzes the NADPH-dependent reduction of L-glutamate 5-phosphate into L-glutamate 5-semialdehyde and phosphate. The product spontaneously undergoes cyclization to form 1-pyrroline-5-carboxylate. The protein is Gamma-glutamyl phosphate reductase of Psychromonas ingrahamii (strain DSM 17664 / CCUG 51855 / 37).